The chain runs to 178 residues: Extracellular fatty acid-binding protein (178 aa).

Residues methionine 1 to alanine 20 form the signal peptide. Threonine 43 is a binding site for enterobactin. 1-tetradecanoyl-sn-glycerol 3-phosphate is bound by residues tyrosine 72 and lysine 104. Cysteine 80 and cysteine 173 form a disulfide bridge. Residues lysine 104, arginine 123, and arginine 134 each coordinate enterobactin. Arginine 134–tyrosine 136 is a binding site for 1-tetradecanoyl-sn-glycerol 3-phosphate.

Belongs to the calycin superfamily. Lipocalin family. In terms of assembly, monomer.

The protein localises to the secreted. Its function is as follows. Siderocalin-like lipocalin tightly binding a variety of bacterial ferric siderophores, also binds long-chain unsaturated fatty acids such as linoleic acid, oleic acid, arachidonic acid and, with a lower affinity, long chain saturated fatty acids such as steraic acid. May act as an antibacterial factor, through dual ligand specificity, both as a siderophore-sequestrating molecule and a lysophosphatidic acid (LPA) sensor. This is Extracellular fatty acid-binding protein from Coturnix japonica (Japanese quail).